Here is a 183-residue protein sequence, read N- to C-terminus: Small ribosomal subunit protein bS20c (183 aa).

Residues M1–C68 constitute a chloroplast transit peptide. The interval A79–E99 is disordered.

Component of the chloroplast small ribosomal subunit (SSU). Mature 70S chloroplast ribosomes of higher plants consist of a small (30S) and a large (50S) subunit. The 30S small subunit contains 1 molecule of ribosomal RNA (16S rRNA) and 24 different proteins. The 50S large subunit contains 3 rRNA molecules (23S, 5S and 4.5S rRNA) and 33 different proteins.

The protein localises to the plastid. Its subcellular location is the chloroplast. Functionally, component of the chloroplast ribosome (chloro-ribosome), a dedicated translation machinery responsible for the synthesis of chloroplast genome-encoded proteins, including proteins of the transcription and translation machinery and components of the photosynthetic apparatus. This Spinacia oleracea (Spinach) protein is Small ribosomal subunit protein bS20c (RPS20).